Here is a 303-residue protein sequence, read N- to C-terminus: 1D-myo-inositol 2-acetamido-2-deoxy-alpha-D-glucopyranoside deacetylase 1 (303 aa).

Residues His15, Asp18, and His157 each coordinate Zn(2+).

It belongs to the MshB deacetylase family. Zn(2+) serves as cofactor.

The enzyme catalyses 1D-myo-inositol 2-acetamido-2-deoxy-alpha-D-glucopyranoside + H2O = 1D-myo-inositol 2-amino-2-deoxy-alpha-D-glucopyranoside + acetate. Catalyzes the deacetylation of 1D-myo-inositol 2-acetamido-2-deoxy-alpha-D-glucopyranoside (GlcNAc-Ins) in the mycothiol biosynthesis pathway. This Saccharopolyspora erythraea (strain ATCC 11635 / DSM 40517 / JCM 4748 / NBRC 13426 / NCIMB 8594 / NRRL 2338) protein is 1D-myo-inositol 2-acetamido-2-deoxy-alpha-D-glucopyranoside deacetylase 1.